Consider the following 289-residue polypeptide: tRNA pseudouridine synthase B (289 aa).

The Nucleophile role is filled by aspartate 38.

This sequence belongs to the pseudouridine synthase TruB family. Type 1 subfamily.

The catalysed reaction is uridine(55) in tRNA = pseudouridine(55) in tRNA. Functionally, responsible for synthesis of pseudouridine from uracil-55 in the psi GC loop of transfer RNAs. The protein is tRNA pseudouridine synthase B of Clostridium novyi (strain NT).